The following is a 224-amino-acid chain: uncharacterized protein (224 aa).

The region spanning 10–77 (TPYYLQFYNQ…DRNGFSITSL (68 aa)) is the HTH gntR-type domain. Residues 37–56 (ETQLAKSFGVSRSPIREAMR) constitute a DNA-binding region (H-T-H motif).

This is an uncharacterized protein from Bacillus subtilis (strain 168).